We begin with the raw amino-acid sequence, 226 residues long: Ras-related protein Rab-32 (226 aa).

Ala-2 bears the N-acetylalanine mark. Val-38, Gly-39, Lys-40, Thr-41, Ser-42, Ser-53, Gln-54, Tyr-56, and Thr-59 together coordinate GTP. Thr-41 is a binding site for Mg(2+). Residues 50 to 64 (QLFSQHYRATIGVDF) carry the Switch 1 motif. A Mg(2+)-binding site is contributed by Thr-59. Residue Ser-73 is modified to Phosphoserine. Residue Asp-83 coordinates Mg(2+). GTP is bound by residues Gly-86, Asn-145, Lys-146, Asp-148, Ala-177, and Lys-178. The Switch 2 motif lies at 86–99 (GQERFGNMTRVYYK). A PKA-RII subunit binding domain region spans residues 180-199 (NINIDEAARFLVENILANHQ). Residues 202 to 226 (PSEENDGRIKLDEETMKKENKSHCC) are disordered. A compositionally biased stretch (basic and acidic residues) spans 206–226 (NDGRIKLDEETMKKENKSHCC). S-geranylgeranyl cysteine attachment occurs at residues Cys-225 and Cys-226.

The protein belongs to the small GTPase superfamily. Rab family. In terms of assembly, interacts with ANKRD27. A decreased interaction with ANKRD27 seen in the presence of SGSM2. Interacts with LRRK2 (via N-terminus); this interaction results in stimulation of RAB10 phosphorylation by LRRK2. The cofactor is Mg(2+).

The protein resides in the mitochondrion. It localises to the mitochondrion outer membrane. The protein localises to the cytoplasmic vesicle. Its subcellular location is the phagosome. It is found in the phagosome membrane. The protein resides in the melanosome. It localises to the melanosome membrane. The enzyme catalyses GTP + H2O = GDP + phosphate + H(+). With respect to regulation, regulated by guanine the nucleotide exchange factor (GEF) BLOC-3 complex composed of HPS1 and HPS4 which promote the exchange of bound GDP for free GTP. Regulated by the GTPase activating protein (GAP) SGSM2/RUTBC1 which increases the GTP hydrolysis activity. Inhibited by GDP dissociation inhibitors (GDIs) which prevent Rab-GDP dissociation. Its function is as follows. The small GTPases Rab are key regulators of intracellular membrane trafficking, from the formation of transport vesicles to their fusion with membranes. Rabs cycle between an inactive GDP-bound form and an active GTP-bound form that is able to recruit to membranes different set of downstream effectors directly responsible for vesicle formation, movement, tethering and fusion. Also acts as an A-kinase anchoring protein by binding to the type II regulatory subunit of protein kinase A and anchoring it to the mitochondrion. Also involved in synchronization of mitochondrial fission. Plays a role in the maturation of phagosomes that engulf pathogens, such as S.aureus and M.tuberculosis. Plays an important role in the control of melanin production and melanosome biogenesis. In concert with RAB38, regulates the proper trafficking of melanogenic enzymes TYR, TYRP1 and DCT/TYRP2 to melanosomes in melanocytes. Stimulates phosphorylation of RAB10 'Thr-73' by LRRK2. The protein is Ras-related protein Rab-32 (RAB32) of Sus scrofa (Pig).